Consider the following 446-residue polypeptide: Glutamate-1-semialdehyde 2,1-aminomutase (446 aa).

Lys264 is modified (N6-(pyridoxal phosphate)lysine).

This sequence belongs to the class-III pyridoxal-phosphate-dependent aminotransferase family. HemL subfamily. Requires pyridoxal 5'-phosphate as cofactor.

The protein localises to the cytoplasm. The enzyme catalyses (S)-4-amino-5-oxopentanoate = 5-aminolevulinate. The protein operates within porphyrin-containing compound metabolism; protoporphyrin-IX biosynthesis; 5-aminolevulinate from L-glutamyl-tRNA(Glu): step 2/2. The chain is Glutamate-1-semialdehyde 2,1-aminomutase from Natronomonas pharaonis (strain ATCC 35678 / DSM 2160 / CIP 103997 / JCM 8858 / NBRC 14720 / NCIMB 2260 / Gabara) (Halobacterium pharaonis).